The primary structure comprises 1107 residues: Unconventional myosin-Ie (1107 aa).

The Myosin motor domain maps to 19–692; sequence SGVDDMVLLS…SLFLLEEMRE (674 aa). An ATP-binding site is contributed by 112-119; that stretch reads GESGAGKT. Positions 581–591 are actin-binding; it reads PHYIRCIKPNE. One can recognise an IQ domain in the interval 695-724; the sequence is YDGYARVIQKTWRKFVARKKYVQMREEASD. The TH1 domain occupies 730–922; it reads KERRRNSINR…NKVLQVSIGP (193 aa). The segment at 919-1052 is disordered; the sequence is SIGPGLPKNS…KPQPKPKPQV (134 aa). Polar residues-rich tracts occupy residues 979–989 and 998–1012; these read NQRSNQKSLYT and RQQS…QTPE. Phosphoserine is present on S1001. Residues 1034–1051 are compositionally biased toward pro residues; the sequence is RPPPAGGRPKPQPKPKPQ. Residues 1050 to 1107 enclose the SH3 domain; it reads PQVPQCKALYAYDAQDTDELSFNANDIIDIIKEDPSGWWTGRLRGKQGLFPNNYVTKI.

Belongs to the TRAFAC class myosin-kinesin ATPase superfamily. Myosin family. Interacts with CALM and F-actin. Interacts (via SH3 domain) with SYNJ1, DNM1 and DNM2. Interacts with ARL14EP. Interacts with CARMIL1. Detected in kidney glomeruli (at protein level). Detected in utricle.

The protein resides in the cytoplasm. It is found in the cell junction. It localises to the cytoplasmic vesicle. Its subcellular location is the clathrin-coated vesicle. The protein localises to the cytoskeleton. In terms of biological role, myosins are actin-based motor molecules with ATPase activity. Unconventional myosins serve in intracellular movements. Their highly divergent tails bind to membranous compartments, which are then moved relative to actin filaments. Binds to membranes containing anionic phospholipids via its tail domain. Involved in clathrin-mediated endocytosis and intracellular movement of clathrin-coated vesicles. Required for normal morphology of the glomerular basement membrane, normal development of foot processes by kidney podocytes and normal kidney function. In dendritic cells, may control the movement of class II-containing cytoplasmic vesicles along the actin cytoskeleton by connecting them with the actin network via ARL14EP and ARL14. The protein is Unconventional myosin-Ie (Myo1e) of Mus musculus (Mouse).